Here is a 429-residue protein sequence, read N- to C-terminus: Ribosomal RNA small subunit methyltransferase B (429 aa).

S-adenosyl-L-methionine is bound by residues 254–260, aspartate 277, aspartate 303, and aspartate 322; that span reads CSAPGGK. The active-site Nucleophile is the cysteine 375. The interval 397-419 is disordered; the sequence is ALSETGTPDQPGQQNLPGGEEGD. A compositionally biased stretch (polar residues) spans 400–412; the sequence is ETGTPDQPGQQNL.

The protein belongs to the class I-like SAM-binding methyltransferase superfamily. RsmB/NOP family.

Its subcellular location is the cytoplasm. The enzyme catalyses cytidine(967) in 16S rRNA + S-adenosyl-L-methionine = 5-methylcytidine(967) in 16S rRNA + S-adenosyl-L-homocysteine + H(+). Specifically methylates the cytosine at position 967 (m5C967) of 16S rRNA. The polypeptide is Ribosomal RNA small subunit methyltransferase B (Salmonella dublin (strain CT_02021853)).